We begin with the raw amino-acid sequence, 517 residues long: 2,3-bisphosphoglycerate-independent phosphoglycerate mutase (517 aa).

Mn(2+)-binding residues include Asp-14 and Ser-64. Residue Ser-64 is the Phosphoserine intermediate of the active site. Substrate is bound by residues His-125, 155 to 156 (RD), Arg-187, Arg-193, 263 to 266 (RSDR), and Lys-337. Asp-404, His-408, Asp-445, His-446, and His-464 together coordinate Mn(2+).

The protein belongs to the BPG-independent phosphoglycerate mutase family. As to quaternary structure, monomer. The cofactor is Mn(2+).

It carries out the reaction (2R)-2-phosphoglycerate = (2R)-3-phosphoglycerate. It functions in the pathway carbohydrate degradation; glycolysis; pyruvate from D-glyceraldehyde 3-phosphate: step 3/5. Its function is as follows. Catalyzes the interconversion of 2-phosphoglycerate and 3-phosphoglycerate. The protein is 2,3-bisphosphoglycerate-independent phosphoglycerate mutase of Nitrosococcus oceani (strain ATCC 19707 / BCRC 17464 / JCM 30415 / NCIMB 11848 / C-107).